A 685-amino-acid chain; its full sequence is Sulfite reductase [ferredoxin], chloroplastic (685 aa).

A chloroplast-targeting transit peptide spans 1–51; that stretch reads MTTSFAAAALRDPKLQIPNYHGLRSSSAASSLSRNALSVPSSTRSSSLIRA. [4Fe-4S] cluster contacts are provided by Cys-495, Cys-501, Cys-541, and Cys-545. Cys-545 is a binding site for siroheme.

The protein belongs to the nitrite and sulfite reductase 4Fe-4S domain family. Monomer. Interacts with ferredoxin. The cofactor is siroheme. It depends on [4Fe-4S] cluster as a cofactor. Post-translationally, phosphorylated; this phosphorylation reduces DNA-binding. In terms of tissue distribution, expressed in leaves, stems, and roots.

It is found in the plastid. Its subcellular location is the chloroplast stroma. The protein localises to the chloroplast nucleoid. The protein resides in the plastid stroma. It carries out the reaction hydrogen sulfide + 6 oxidized [2Fe-2S]-[ferredoxin] + 3 H2O = sulfite + 6 reduced [2Fe-2S]-[ferredoxin] + 7 H(+). In terms of biological role, essential protein with sulfite reductase activity required in assimilatory sulfate reduction pathway during both primary and secondary metabolism and thus involved in development and growth. Functionally, DNA-binding protein that binds to both double-stranded and single-stranded DNA without significant sequence specificity to reversibly repress the transcriptional activity of chloroplast nucleoids by promoting DNA compaction and possibly regulate DNA replication. This chain is Sulfite reductase [ferredoxin], chloroplastic (SIR), found in Pisum sativum (Garden pea).